The primary structure comprises 72 residues: General transcription factor IIH subunit 5 (72 aa).

The protein belongs to the TFB5 family. In terms of assembly, component of the 7-subunit TFIIH core complex composed of XPB/repB, XPD/repD, gtf2h1, gtf2h2, gtf2h3, gtf2h4 and gtf2h5, which is active in NER. The core complex associates with the 3-subunit CDK-activating kinase (CAK) module composed of cycH/cyclin H, cdk7 and mnat1 to form the 10-subunit holoenzyme (holo-TFIIH) active in transcription.

Its subcellular location is the nucleus. Functionally, component of the general transcription and DNA repair factor IIH (TFIIH) core complex, which is involved in general and transcription-coupled nucleotide excision repair (NER) of damaged DNA and, when complexed to CAK, in RNA transcription by RNA polymerase II. In NER, TFIIH acts by opening DNA around the lesion to allow the excision of the damaged oligonucleotide and its replacement by a new DNA fragment. In transcription, TFIIH has an essential role in transcription initiation. When the pre-initiation complex (PIC) has been established, TFIIH is required for promoter opening and promoter escape. Phosphorylation of the C-terminal tail (CTD) of the largest subunit of RNA polymerase II by the kinase module CAK controls the initiation of transcription. The polypeptide is General transcription factor IIH subunit 5 (gtf2h5) (Dictyostelium discoideum (Social amoeba)).